A 165-amino-acid chain; its full sequence is Lipoprotein signal peptidase (165 aa).

The next 3 membrane-spanning stretches (helical) occupy residues 9 to 29, 65 to 85, and 97 to 119; these read PFLW…LAVV, WQKY…LFFL, and TGYA…HGFV. Active-site residues include Asp-121 and Asp-139. A helical membrane pass occupies residues 134-154; sequence VFNIADVAICIGAGLLAIDAF.

It belongs to the peptidase A8 family.

It localises to the cell inner membrane. The catalysed reaction is Release of signal peptides from bacterial membrane prolipoproteins. Hydrolyzes -Xaa-Yaa-Zaa-|-(S,diacylglyceryl)Cys-, in which Xaa is hydrophobic (preferably Leu), and Yaa (Ala or Ser) and Zaa (Gly or Ala) have small, neutral side chains.. Its pathway is protein modification; lipoprotein biosynthesis (signal peptide cleavage). Its function is as follows. This protein specifically catalyzes the removal of signal peptides from prolipoproteins. The polypeptide is Lipoprotein signal peptidase (Histophilus somni (strain 129Pt) (Haemophilus somnus)).